The sequence spans 259 residues: Glutamate racemase (259 aa).

Substrate-binding positions include 7 to 8 (DS) and 39 to 40 (YG). Cysteine 70 acts as the Proton donor/acceptor in catalysis. Residue 71–72 (NT) participates in substrate binding. The active-site Proton donor/acceptor is the cysteine 180. Substrate is bound at residue 181 to 182 (TH).

It belongs to the aspartate/glutamate racemases family.

It carries out the reaction L-glutamate = D-glutamate. The protein operates within cell wall biogenesis; peptidoglycan biosynthesis. In terms of biological role, provides the (R)-glutamate required for cell wall biosynthesis. In Persephonella marina (strain DSM 14350 / EX-H1), this protein is Glutamate racemase.